Consider the following 565-residue polypeptide: Adenine deaminase 1 (565 aa).

Belongs to the metallo-dependent hydrolases superfamily. Adenine deaminase family. It depends on Mn(2+) as a cofactor.

It carries out the reaction adenine + H2O + H(+) = hypoxanthine + NH4(+). The sequence is that of Adenine deaminase 1 from Rhizobium meliloti (strain 1021) (Ensifer meliloti).